We begin with the raw amino-acid sequence, 91 residues long: ATP synthase subunit c (91 aa).

Helical transmembrane passes span 4–24 (FTMC…GTGI) and 53–73 (IGLA…LIIL).

Belongs to the ATPase C chain family. In terms of assembly, F-type ATPases have 2 components, F(1) - the catalytic core - and F(0) - the membrane proton channel. F(1) has five subunits: alpha(3), beta(3), gamma(1), delta(1), epsilon(1). F(0) has three main subunits: a(1), b(2) and c(10-14). The alpha and beta chains form an alternating ring which encloses part of the gamma chain. F(1) is attached to F(0) by a central stalk formed by the gamma and epsilon chains, while a peripheral stalk is formed by the delta and b chains.

The protein localises to the cell inner membrane. F(1)F(0) ATP synthase produces ATP from ADP in the presence of a proton or sodium gradient. F-type ATPases consist of two structural domains, F(1) containing the extramembraneous catalytic core and F(0) containing the membrane proton channel, linked together by a central stalk and a peripheral stalk. During catalysis, ATP synthesis in the catalytic domain of F(1) is coupled via a rotary mechanism of the central stalk subunits to proton translocation. Functionally, key component of the F(0) channel; it plays a direct role in translocation across the membrane. A homomeric c-ring of between 10-14 subunits forms the central stalk rotor element with the F(1) delta and epsilon subunits. The chain is ATP synthase subunit c from Trichlorobacter lovleyi (strain ATCC BAA-1151 / DSM 17278 / SZ) (Geobacter lovleyi).